Consider the following 606-residue polypeptide: Elongation factor 4 (606 aa).

Residues 11-193 (DKIRNFSIVA…AIVTRLPPPK (183 aa)) form the tr-type G domain. Residues 23-28 (DHGKST) and 140-143 (NKVD) contribute to the GTP site.

It belongs to the TRAFAC class translation factor GTPase superfamily. Classic translation factor GTPase family. LepA subfamily.

It is found in the cell inner membrane. The catalysed reaction is GTP + H2O = GDP + phosphate + H(+). In terms of biological role, required for accurate and efficient protein synthesis under certain stress conditions. May act as a fidelity factor of the translation reaction, by catalyzing a one-codon backward translocation of tRNAs on improperly translocated ribosomes. Back-translocation proceeds from a post-translocation (POST) complex to a pre-translocation (PRE) complex, thus giving elongation factor G a second chance to translocate the tRNAs correctly. Binds to ribosomes in a GTP-dependent manner. The polypeptide is Elongation factor 4 (Caulobacter vibrioides (strain ATCC 19089 / CIP 103742 / CB 15) (Caulobacter crescentus)).